The sequence spans 597 residues: uncharacterized protein (597 aa).

Residues 16–78 form the PWWP domain; sequence VGRLVWVRRR…LENSKTVKAF (63 aa). 2 disordered regions span residues 126-210 and 449-482; these read NLCN…MRGL and QLKG…STPH. Over residues 134 to 143 the composition is skewed to basic and acidic residues; it reads EDSKRCLSGK. Residues 144–161 show a composition bias toward acidic residues; it reads EDEDSGSSDAEETEDDEL. A compositionally biased stretch (polar residues) spans 166–185; the sequence is EQLQSSISSQEMNNVGASKV. Basic residues predominate over residues 450 to 460; that stretch reads LKGKRNSRQMS. A compositionally biased stretch (basic and acidic residues) spans 461–470; it reads KKQEERRNVY.

This is an uncharacterized protein from Arabidopsis thaliana (Mouse-ear cress).